Consider the following 180-residue polypeptide: Nucleoside triphosphate/diphosphate phosphatase (180 aa).

Catalysis depends on Arg26, which acts as the Proton donor. Mg(2+) contacts are provided by Asn90, Asp106, Asp108, Asp110, Asp123, and Glu126.

It belongs to the Ntdp family. Mg(2+) serves as cofactor.

It catalyses the reaction a ribonucleoside 5'-triphosphate + H2O = a ribonucleoside 5'-diphosphate + phosphate + H(+). It carries out the reaction a ribonucleoside 5'-diphosphate + H2O = a ribonucleoside 5'-phosphate + phosphate + H(+). In terms of biological role, has nucleoside phosphatase activity towards nucleoside triphosphates and nucleoside diphosphates. This chain is Nucleoside triphosphate/diphosphate phosphatase, found in Staphylococcus aureus (strain MRSA252).